The primary structure comprises 208 residues: ER membrane protein complex subunit 9 (208 aa).

The MPN domain occupies 4–139; the sequence is VEISALAYVK…VIVLENQGLR (136 aa).

This sequence belongs to the EMC8/EMC9 family. In terms of assembly, component of the ER membrane protein complex (EMC). EMC8 and EMC9 are mutually exclusive subunits of the EMC complex.

It localises to the endoplasmic reticulum membrane. Part of the endoplasmic reticulum membrane protein complex (EMC) that enables the energy-independent insertion into endoplasmic reticulum membranes of newly synthesized membrane proteins. Preferentially accommodates proteins with transmembrane domains that are weakly hydrophobic or contain destabilizing features such as charged and aromatic residues. Involved in the cotranslational insertion of multi-pass membrane proteins in which stop-transfer membrane-anchor sequences become ER membrane spanning helices. It is also required for the post-translational insertion of tail-anchored/TA proteins in endoplasmic reticulum membranes. By mediating the proper cotranslational insertion of N-terminal transmembrane domains in an N-exo topology, with translocated N-terminus in the lumen of the ER, controls the topology of multi-pass membrane proteins like the G protein-coupled receptors. By regulating the insertion of various proteins in membranes, it is indirectly involved in many cellular processes. In Homo sapiens (Human), this protein is ER membrane protein complex subunit 9 (EMC9).